The chain runs to 277 residues: NH(3)-dependent NAD(+) synthetase (277 aa).

47–54 (GISGGQDS) provides a ligand contact to ATP. Position 53 (D53) interacts with Mg(2+). R141 contributes to the deamido-NAD(+) binding site. T161 contributes to the ATP binding site. E166 serves as a coordination point for Mg(2+). The deamido-NAD(+) site is built by K174 and D181. ATP contacts are provided by K190 and T212. 261-262 (HK) contacts deamido-NAD(+).

This sequence belongs to the NAD synthetase family. As to quaternary structure, homodimer.

It carries out the reaction deamido-NAD(+) + NH4(+) + ATP = AMP + diphosphate + NAD(+) + H(+). The protein operates within cofactor biosynthesis; NAD(+) biosynthesis; NAD(+) from deamido-NAD(+) (ammonia route): step 1/1. Catalyzes the ATP-dependent amidation of deamido-NAD to form NAD. Uses ammonia as a nitrogen source. This is NH(3)-dependent NAD(+) synthetase from Lactobacillus gasseri (strain ATCC 33323 / DSM 20243 / BCRC 14619 / CIP 102991 / JCM 1131 / KCTC 3163 / NCIMB 11718 / NCTC 13722 / AM63).